A 650-amino-acid chain; its full sequence is Fructose-1,6-bisphosphatase class 3 (650 aa).

The protein belongs to the FBPase class 3 family. Requires Mn(2+) as cofactor.

The enzyme catalyses beta-D-fructose 1,6-bisphosphate + H2O = beta-D-fructose 6-phosphate + phosphate. Its pathway is carbohydrate biosynthesis; gluconeogenesis. The protein is Fructose-1,6-bisphosphatase class 3 of Staphylococcus xylosus.